The primary structure comprises 472 residues: 3-isopropylmalate dehydratase large subunit (472 aa).

Residues Cys347, Cys407, and Cys410 each coordinate [4Fe-4S] cluster.

The protein belongs to the aconitase/IPM isomerase family. LeuC type 1 subfamily. Heterodimer of LeuC and LeuD. [4Fe-4S] cluster is required as a cofactor.

It catalyses the reaction (2R,3S)-3-isopropylmalate = (2S)-2-isopropylmalate. It participates in amino-acid biosynthesis; L-leucine biosynthesis; L-leucine from 3-methyl-2-oxobutanoate: step 2/4. In terms of biological role, catalyzes the isomerization between 2-isopropylmalate and 3-isopropylmalate, via the formation of 2-isopropylmaleate. The chain is 3-isopropylmalate dehydratase large subunit from Bacillus subtilis (strain 168).